We begin with the raw amino-acid sequence, 481 residues long: Glutamate--tRNA ligase 1 (481 aa).

Positions Pro11–Gly21 match the 'HIGH' region motif. The 'KMSKS' region motif lies at Lys244–Arg248. Position 247 (Lys247) interacts with ATP.

This sequence belongs to the class-I aminoacyl-tRNA synthetase family. Glutamate--tRNA ligase type 1 subfamily. In terms of assembly, monomer.

The protein resides in the cytoplasm. The enzyme catalyses tRNA(Glu) + L-glutamate + ATP = L-glutamyl-tRNA(Glu) + AMP + diphosphate. In terms of biological role, catalyzes the attachment of glutamate to tRNA(Glu) in a two-step reaction: glutamate is first activated by ATP to form Glu-AMP and then transferred to the acceptor end of tRNA(Glu). The chain is Glutamate--tRNA ligase 1 from Caldanaerobacter subterraneus subsp. tengcongensis (strain DSM 15242 / JCM 11007 / NBRC 100824 / MB4) (Thermoanaerobacter tengcongensis).